The following is a 486-amino-acid chain: Glutamyl-tRNA(Gln) amidotransferase subunit A (486 aa).

Catalysis depends on charge relay system residues K76 and S151. S175 (acyl-ester intermediate) is an active-site residue.

Belongs to the amidase family. GatA subfamily. In terms of assembly, heterotrimer of A, B and C subunits.

The enzyme catalyses L-glutamyl-tRNA(Gln) + L-glutamine + ATP + H2O = L-glutaminyl-tRNA(Gln) + L-glutamate + ADP + phosphate + H(+). In terms of biological role, allows the formation of correctly charged Gln-tRNA(Gln) through the transamidation of misacylated Glu-tRNA(Gln) in organisms which lack glutaminyl-tRNA synthetase. The reaction takes place in the presence of glutamine and ATP through an activated gamma-phospho-Glu-tRNA(Gln). The polypeptide is Glutamyl-tRNA(Gln) amidotransferase subunit A (Nitrosomonas europaea (strain ATCC 19718 / CIP 103999 / KCTC 2705 / NBRC 14298)).